A 954-amino-acid chain; its full sequence is Glycine dehydrogenase (decarboxylating) (954 aa).

An N6-(pyridoxal phosphate)lysine modification is found at Lys704.

Belongs to the GcvP family. In terms of assembly, the glycine cleavage system is composed of four proteins: P, T, L and H. Pyridoxal 5'-phosphate is required as a cofactor.

It carries out the reaction N(6)-[(R)-lipoyl]-L-lysyl-[glycine-cleavage complex H protein] + glycine + H(+) = N(6)-[(R)-S(8)-aminomethyldihydrolipoyl]-L-lysyl-[glycine-cleavage complex H protein] + CO2. In terms of biological role, the glycine cleavage system catalyzes the degradation of glycine. The P protein binds the alpha-amino group of glycine through its pyridoxal phosphate cofactor; CO(2) is released and the remaining methylamine moiety is then transferred to the lipoamide cofactor of the H protein. This is Glycine dehydrogenase (decarboxylating) from Vibrio parahaemolyticus serotype O3:K6 (strain RIMD 2210633).